Here is a 294-residue protein sequence, read N- to C-terminus: 33 kDa chaperonin (294 aa).

Cystine bridges form between C236/C238 and C269/C272.

The protein belongs to the HSP33 family. Under oxidizing conditions two disulfide bonds are formed involving the reactive cysteines. Under reducing conditions zinc is bound to the reactive cysteines and the protein is inactive.

It localises to the cytoplasm. Its function is as follows. Redox regulated molecular chaperone. Protects both thermally unfolding and oxidatively damaged proteins from irreversible aggregation. Plays an important role in the bacterial defense system toward oxidative stress. This Desulfotalea psychrophila (strain LSv54 / DSM 12343) protein is 33 kDa chaperonin.